Reading from the N-terminus, the 222-residue chain is Cyclin-U2-1 (222 aa).

It belongs to the cyclin family. Cyclin U/P subfamily. As to quaternary structure, interacts with CDKA-1. In terms of tissue distribution, expressed in roots, stems and flowers. Expressed in the shoot apex, leaf primordia and young leaves.

In Arabidopsis thaliana (Mouse-ear cress), this protein is Cyclin-U2-1 (CYCU2-1).